A 49-amino-acid polypeptide reads, in one-letter code: uncharacterized protein (49 aa).

This is an uncharacterized protein from Homo sapiens (Human).